Reading from the N-terminus, the 934-residue chain is Desmocollin 2-like protein (934 aa).

4 Cadherin domains span residues 167–274 (RWRP…APEF), 274–381 (FTGN…PPTF), 382–494 (KEKL…GPEF), and 495–600 (NPNI…IPVI). The Extracellular portion of the chain corresponds to 167-716 (RWRPLPFSVV…SASVSLGNYG (550 aa)). 3 N-linked (GlcNAc...) asparagine glycosylation sites follow: asparagine 197, asparagine 296, and asparagine 316. Residues asparagine 509, asparagine 565, and asparagine 569 are each glycosylated (N-linked (GlcNAc...) asparagine). A helical membrane pass occupies residues 717–737 (ILALVLSGLLLLLLCLFLIFF). Residues 738 to 934 (CTTKRDKLQI…ICYTTNKTGK (197 aa)) are Cytoplasmic-facing.

In terms of tissue distribution, expressed at low levels in the brain and heart.

It localises to the cell junction. It is found in the desmosome. The protein localises to the cell membrane. Its function is as follows. A component of desmosome cell-cell junctions which are required for positive regulation of cellular adhesion. Involved in the interaction of plaque proteins and intermediate filaments mediating cell-cell adhesion. Involved in the formation and structural organization of desmosome cell-cell junctions during embryonic development. Required for embryogenesis, specifically for progression of epiboly and normal convergence-extension movements during gastrulation. Required for the development of desmosomal-rich midlines in the heart. Plays an important role in ventricular contraction and resulting heart stroke volume. This chain is Desmocollin 2-like protein, found in Danio rerio (Zebrafish).